A 126-amino-acid chain; its full sequence is S-adenosylmethionine decarboxylase proenzyme (126 aa).

The Schiff-base intermediate with substrate; via pyruvic acid role is filled by Ser63. At Ser63 the chain carries Pyruvic acid (Ser); by autocatalysis. His68 functions as the Proton acceptor; for processing activity in the catalytic mechanism. The active-site Proton donor; for catalytic activity is Cys83.

The protein belongs to the prokaryotic AdoMetDC family. Type 1 subfamily. Heterotetramer of two alpha and two beta chains arranged as a dimer of alpha/beta heterodimers. Pyruvate serves as cofactor. Is synthesized initially as an inactive proenzyme. Formation of the active enzyme involves a self-maturation process in which the active site pyruvoyl group is generated from an internal serine residue via an autocatalytic post-translational modification. Two non-identical subunits are generated from the proenzyme in this reaction, and the pyruvate is formed at the N-terminus of the alpha chain, which is derived from the carboxyl end of the proenzyme. The post-translation cleavage follows an unusual pathway, termed non-hydrolytic serinolysis, in which the side chain hydroxyl group of the serine supplies its oxygen atom to form the C-terminus of the beta chain, while the remainder of the serine residue undergoes an oxidative deamination to produce ammonia and the pyruvoyl group blocking the N-terminus of the alpha chain.

The catalysed reaction is S-adenosyl-L-methionine + H(+) = S-adenosyl 3-(methylsulfanyl)propylamine + CO2. The protein operates within amine and polyamine biosynthesis; S-adenosylmethioninamine biosynthesis; S-adenosylmethioninamine from S-adenosyl-L-methionine: step 1/1. In terms of biological role, catalyzes the decarboxylation of S-adenosylmethionine to S-adenosylmethioninamine (dcAdoMet), the propylamine donor required for the synthesis of the polyamines spermine and spermidine from the diamine putrescine. This is S-adenosylmethionine decarboxylase proenzyme from Bacillus velezensis (strain DSM 23117 / BGSC 10A6 / LMG 26770 / FZB42) (Bacillus amyloliquefaciens subsp. plantarum).